We begin with the raw amino-acid sequence, 844 residues long: Leucine--tRNA ligase (844 aa).

The 'HIGH' region motif lies at 39-49 (PYPSGRIHMGH). The short motif at 621–625 (KMSKS) is the 'KMSKS' region element. Residue lysine 624 coordinates ATP.

This sequence belongs to the class-I aminoacyl-tRNA synthetase family.

It is found in the cytoplasm. The catalysed reaction is tRNA(Leu) + L-leucine + ATP = L-leucyl-tRNA(Leu) + AMP + diphosphate. The polypeptide is Leucine--tRNA ligase (Paracoccus denitrificans (strain Pd 1222)).